Reading from the N-terminus, the 203-residue chain is Ras-related protein Rab-13 (203 aa).

Residues Ser-17, Gly-18, Gly-20, Lys-21, Thr-22, Cys-23, and Thr-40 each contribute to the GTP site. A Mg(2+)-binding site is contributed by Thr-22. The Switch 1 motif lies at 31–45; that stretch reads DNFNSTYISTIGIDF. Thr-40 is a Mg(2+) binding site. Glycyl lysine isopeptide (Lys-Gly) (interchain with G-Cter in ubiquitin) cross-links involve residues Lys-46 and Lys-58. Asp-63 provides a ligand contact to Mg(2+). Residues 63–80 carry the Switch 2 motif; sequence DTAGQERFKTITTAYYRG. 6 residues coordinate GTP: Gly-66, Asn-121, Lys-122, Asp-124, Ala-152, and Lys-153. The tract at residues 173–203 is disordered; the sequence is TGGRRSGNSSKPSSTDLKVSDKKNSNKCSLG. Ser-178 is subject to Phosphoserine. Residues 178–189 show a composition bias toward polar residues; that stretch reads SGNSSKPSSTDL. Cys-200 is modified (cysteine methyl ester). The S-geranylgeranyl cysteine moiety is linked to residue Cys-200. Residues 201–203 constitute a propeptide, removed in mature form; the sequence is SLG.

The protein belongs to the small GTPase superfamily. Rab family. As to quaternary structure, interacts (GTP-bound form) with MICALL2; competes with RAB8A and is involved in tight junctions assembly. Interacts (GTP-bound form) with MICALL1. Interacts (GTP-bound form) with MICAL1, MICAL3, MICALCL, EHBP1 and EHBP1L1; ternary complexes of RAB8A, RAB13 and either MICAL1 or EHBP1L1 are possible. Interacts with PRKACA; downstream effector of RAB13 involved in tight junction assembly. Interacts with GRB2; may recruit RAB13 to the leading edge of migrating endothelial cells where it can activate RHOA. Interacts (isoprenylated form) with PDE6D; dissociates RAB13 from membranes. Interacts with BICDL2/BICDR2. Interacts with LEPROT and LEPROTL1. The cofactor is Mg(2+). Post-translationally, ubiquitinated via 'Lys-11'-linked ubiquitination on Lys-46 and Lys-58; impairing the recruitment of guanosine diphosphate (GDP) dissociation inhibitor 1/GDI1. As to expression, highest levels found in lung, kidney, whole brain and spinal cord. Expressed in all tissues tested including Sertoli and germ cells (at protein level). Also detected in osteoclasts.

It localises to the cell membrane. The protein resides in the cytoplasmic vesicle membrane. Its subcellular location is the cell junction. The protein localises to the tight junction. It is found in the golgi apparatus. It localises to the trans-Golgi network membrane. The protein resides in the recycling endosome membrane. Its subcellular location is the cell projection. The protein localises to the lamellipodium. The catalysed reaction is GTP + H2O = GDP + phosphate + H(+). Its activity is regulated as follows. Regulated by guanine nucleotide exchange factors (GEFs) including DENND1C, which promote the exchange of bound GDP for free GTP. Regulated by GTPase activating proteins (GAPs) which increase the GTP hydrolysis activity. Inhibited by GDP dissociation inhibitors (GDIs). Activated in response to insulin. In terms of biological role, the small GTPases Rab are key regulators of intracellular membrane trafficking, from the formation of transport vesicles to their fusion with membranes. Rabs cycle between an inactive GDP-bound form and an active GTP-bound form that is able to recruit to membranes different sets of downstream effectors directly responsible for vesicle formation, movement, tethering and fusion. RAB13 is involved in endocytic recycling and regulates the transport to the plasma membrane of transmembrane proteins like the tight junction protein OCLN/occludin. Thereby, it regulates the assembly and the activity of tight junctions. Moreover, it may also regulate tight junction assembly by activating the PKA signaling pathway and by reorganizing the actin cytoskeleton through the activation of the downstream effectors PRKACA and MICALL2 respectively. Through its role in tight junction assembly, may play a role in the establishment of Sertoli cell barrier. Plays also a role in angiogenesis through regulation of endothelial cells chemotaxis. Also involved in neurite outgrowth. Has also been proposed to play a role in post-Golgi membrane trafficking from the TGN to the recycling endosome. Finally, it has been involved in insulin-induced transport to the plasma membrane of the glucose transporter GLUT4 and therefore may play a role in glucose homeostasis. The sequence is that of Ras-related protein Rab-13 from Rattus norvegicus (Rat).